We begin with the raw amino-acid sequence, 457 residues long: Nuclear hormone receptor family member nhr-20 (457 aa).

The nuclear receptor DNA-binding region spans 16-92; sequence TSKCLVCEHP…AGMRRECVQK (77 aa). 2 consecutive NR C4-type zinc fingers follow at residues 19 to 40 and 56 to 80; these read CLVC…CLAC and CKKD…FDKC. Positions 125–182 are disordered; that stretch reads GDQTDDNSPLSIEKKSPPGLLPNDSPMMADFKFDPSDIPSTSGGSTQRLERSPSPKLA. The segment covering 162-171 has biased composition (polar residues); the sequence is IPSTSGGSTQ. The NR LBD domain occupies 201-457; it reads QLKNSMDRRR…DALSKSLLTL (257 aa).

This sequence belongs to the nuclear hormone receptor family.

It is found in the nucleus. Its function is as follows. Orphan nuclear receptor. This chain is Nuclear hormone receptor family member nhr-20 (nhr-20), found in Caenorhabditis elegans.